The sequence spans 156 residues: ATP synthase subunit b', chloroplastic (156 aa).

The chain crosses the membrane as a helical span at residues 24–44; that stretch reads ATLPLVAIQFILLMVLLNILL.

The protein belongs to the ATPase B chain family. As to quaternary structure, F-type ATPases have 2 components, F(1) - the catalytic core - and F(0) - the membrane proton channel. F(1) has five subunits: alpha(3), beta(3), gamma(1), delta(1), epsilon(1). F(0) has four main subunits: a(1), b(1), b'(1) and c(10-14). The alpha and beta chains form an alternating ring which encloses part of the gamma chain. F(1) is attached to F(0) by a central stalk formed by the gamma and epsilon chains, while a peripheral stalk is formed by the delta, b and b' chains.

The protein resides in the plastid. The protein localises to the chloroplast thylakoid membrane. Functionally, f(1)F(0) ATP synthase produces ATP from ADP in the presence of a proton or sodium gradient. F-type ATPases consist of two structural domains, F(1) containing the extramembraneous catalytic core and F(0) containing the membrane proton channel, linked together by a central stalk and a peripheral stalk. During catalysis, ATP synthesis in the catalytic domain of F(1) is coupled via a rotary mechanism of the central stalk subunits to proton translocation. In terms of biological role, component of the F(0) channel, it forms part of the peripheral stalk, linking F(1) to F(0). The b'-subunit is a diverged and duplicated form of b found in plants and photosynthetic bacteria. This chain is ATP synthase subunit b', chloroplastic, found in Phaeodactylum tricornutum (strain CCAP 1055/1).